A 150-amino-acid chain; its full sequence is Large ribosomal subunit protein uL15 (150 aa).

Basic and acidic residues predominate over residues 1-13; the sequence is MADNDAIKVHDLR. The disordered stretch occupies residues 1–44; sequence MADNDAIKVHDLRPAPGAKTAKTRVGRGEASKGKTAGRGTKGTK.

Belongs to the universal ribosomal protein uL15 family. Part of the 50S ribosomal subunit.

Functionally, binds to the 23S rRNA. This is Large ribosomal subunit protein uL15 from Micrococcus luteus (strain ATCC 4698 / DSM 20030 / JCM 1464 / CCM 169 / CCUG 5858 / IAM 1056 / NBRC 3333 / NCIMB 9278 / NCTC 2665 / VKM Ac-2230) (Micrococcus lysodeikticus).